We begin with the raw amino-acid sequence, 369 residues long: Peptide chain release factor 2 (369 aa).

N5-methylglutamine is present on Q250.

This sequence belongs to the prokaryotic/mitochondrial release factor family. Methylated by PrmC. Methylation increases the termination efficiency of RF2.

It localises to the cytoplasm. In terms of biological role, peptide chain release factor 2 directs the termination of translation in response to the peptide chain termination codons UGA and UAA. In Rickettsia prowazekii (strain Madrid E), this protein is Peptide chain release factor 2 (prfB).